Reading from the N-terminus, the 701-residue chain is Elongation factor G (701 aa).

The region spanning 8–290 is the tr-type G domain; sequence SRYRNIGISA…AVIEYLPAPT (283 aa). GTP is bound by residues 17–24, 88–92, and 142–145; these read AHIDAGKT, DTPGH, and NKMD.

Belongs to the TRAFAC class translation factor GTPase superfamily. Classic translation factor GTPase family. EF-G/EF-2 subfamily.

It localises to the cytoplasm. Its function is as follows. Catalyzes the GTP-dependent ribosomal translocation step during translation elongation. During this step, the ribosome changes from the pre-translocational (PRE) to the post-translocational (POST) state as the newly formed A-site-bound peptidyl-tRNA and P-site-bound deacylated tRNA move to the P and E sites, respectively. Catalyzes the coordinated movement of the two tRNA molecules, the mRNA and conformational changes in the ribosome. This chain is Elongation factor G, found in Actinobacillus pleuropneumoniae serotype 5b (strain L20).